A 421-amino-acid chain; its full sequence is ATP-dependent RNA helicase RhlB (421 aa).

The Q motif signature appears at 9 to 37 (QKFSDFALHPKVVEALEKKGFHNCTPIQA). The Helicase ATP-binding domain occupies 40–219 (LPLTLAGRDV…FEQMNNAEYI (180 aa)). 53 to 60 (AQTGTGKT) is an ATP binding site. Residues 165-168 (DEAD) carry the DEAD box motif. The Helicase C-terminal domain occupies 245–390 (RLLQTLIEEE…VSKYNPDALM (146 aa)). A disordered region spans residues 392–421 (DLPKPLRLTRPRTGNGPRRTGAPRNRRRSG). Residues 402–414 (PRTGNGPRRTGAP) are compositionally biased toward low complexity.

This sequence belongs to the DEAD box helicase family. RhlB subfamily. Component of the RNA degradosome, which is a multiprotein complex involved in RNA processing and mRNA degradation.

Its subcellular location is the cytoplasm. It catalyses the reaction ATP + H2O = ADP + phosphate + H(+). In terms of biological role, DEAD-box RNA helicase involved in RNA degradation. Has RNA-dependent ATPase activity and unwinds double-stranded RNA. The sequence is that of ATP-dependent RNA helicase RhlB from Escherichia fergusonii (strain ATCC 35469 / DSM 13698 / CCUG 18766 / IAM 14443 / JCM 21226 / LMG 7866 / NBRC 102419 / NCTC 12128 / CDC 0568-73).